The primary structure comprises 361 residues: Probable galacturonosyltransferase-like 5 (361 aa).

The Cytoplasmic segment spans residues 1-6 (MHWITR). A helical; Signal-anchor for type II membrane protein membrane pass occupies residues 7–27 (FSAFFSAALAMILLSPSLQSF). Topologically, residues 28 to 361 (SPAAAIRSSH…APYDLYKHSH (334 aa)) are lumenal. Residues Asn218 and Asn234 are each glycosylated (N-linked (GlcNAc...) asparagine).

Belongs to the glycosyltransferase 8 family.

The protein resides in the golgi apparatus membrane. The protein operates within glycan metabolism; pectin biosynthesis. Functionally, may be involved in pectin and/or xylans biosynthesis in cell walls. The polypeptide is Probable galacturonosyltransferase-like 5 (GATL5) (Arabidopsis thaliana (Mouse-ear cress)).